Consider the following 413-residue polypeptide: Cell division protein FtsA (413 aa).

This sequence belongs to the FtsA/MreB family. In terms of assembly, self-interacts. Interacts with FtsZ.

The protein localises to the cell inner membrane. Functionally, cell division protein that is involved in the assembly of the Z ring. May serve as a membrane anchor for the Z ring. This chain is Cell division protein FtsA, found in Borreliella burgdorferi (strain ATCC 35210 / DSM 4680 / CIP 102532 / B31) (Borrelia burgdorferi).